Reading from the N-terminus, the 189-residue chain is Probable DNA-directed RNA polymerase subunit delta (189 aa).

The HTH HARE-type domain occupies 14–81 (LSMIEVAHAI…GENVWALRTW (68 aa)). Acidic residues-rich tracts occupy residues 90-100 (EVDHPEDDGDE) and 118-189 (EGDD…EDEE). Residues 90 to 189 (EVDHPEDDGD…DDLDDDEDEE (100 aa)) form a disordered region.

The protein belongs to the RpoE family. In terms of assembly, RNAP is composed of a core of 2 alpha, a beta and a beta' subunits. The core is associated with a delta subunit and one of several sigma factors.

Functionally, participates in both the initiation and recycling phases of transcription. In the presence of the delta subunit, RNAP displays an increased specificity of transcription, a decreased affinity for nucleic acids, and an increased efficiency of RNA synthesis because of enhanced recycling. The polypeptide is Probable DNA-directed RNA polymerase subunit delta (Lactobacillus delbrueckii subsp. bulgaricus (strain ATCC 11842 / DSM 20081 / BCRC 10696 / JCM 1002 / NBRC 13953 / NCIMB 11778 / NCTC 12712 / WDCM 00102 / Lb 14)).